The chain runs to 122 residues: Mth938 domain-containing protein (122 aa).

Residues 6–122 (IASLSWGQMK…RVGGVFHSTC (117 aa)) are MTH138-like domain.

This sequence belongs to the AAMDC family.

Its subcellular location is the cytoplasm. Functionally, may play a role in preadipocyte differentiation and adipogenesis. The sequence is that of Mth938 domain-containing protein (AAMDC) from Bos taurus (Bovine).